The chain runs to 158 residues: Cyclic pyranopterin monophosphate synthase (158 aa).

Substrate-binding positions include 75-77 and 113-114; these read LCH and ME. D128 is an active-site residue.

It belongs to the MoaC family. As to quaternary structure, homohexamer; trimer of dimers.

It catalyses the reaction (8S)-3',8-cyclo-7,8-dihydroguanosine 5'-triphosphate = cyclic pyranopterin phosphate + diphosphate. It functions in the pathway cofactor biosynthesis; molybdopterin biosynthesis. In terms of biological role, catalyzes the conversion of (8S)-3',8-cyclo-7,8-dihydroguanosine 5'-triphosphate to cyclic pyranopterin monophosphate (cPMP). This is Cyclic pyranopterin monophosphate synthase from Actinobacillus pleuropneumoniae serotype 5b (strain L20).